Consider the following 312-residue polypeptide: MALALCCMSHSPLLNLPGPSRDLLDDIDAAIARARGFVEDYDPQLVVIFSPDHYNGFFYKVMPPFCIGSSASGVGDYGTHAGPLDVPEKLAVDCAQAVLDAGVDIAVSASMDVDHGTVQPLEKLFGTAISRPVIPVFVNAIGVPLGPMHRCRALGAAVGTYLATLDKRVLVMGSGGLSHSPPVPTLATAPEPVLQRIVHGAPMTAEQRQARQAAVIDAARSFAAGDSALQPLNPTWDHRFLEIIDRGSLSELDRWSNSFVTHEGGGSAHEIRTWVAAFAALQAAGPYETTMRYYTPAPELIAGFAIRTARPK.

His115 functions as the Proton donor in the catalytic mechanism. The Proton acceptor role is filled by His179.

It belongs to the LigB/MhpB extradiol dioxygenase family. As to quaternary structure, homotetramer. It depends on Fe(2+) as a cofactor.

It catalyses the reaction 3-(2,3-dihydroxyphenyl)propanoate + O2 = (2Z,4E)-2-hydroxy-6-oxonona-2,4-dienedioate + H(+). The enzyme catalyses (2E)-3-(2,3-dihydroxyphenyl)prop-2-enoate + O2 = (2Z,4E,7E)-2-hydroxy-6-oxonona-2,4,7-trienedioate + H(+). It participates in aromatic compound metabolism; 3-phenylpropanoate degradation. Its function is as follows. Catalyzes the non-heme iron(II)-dependent oxidative cleavage of 2,3-dihydroxyphenylpropionic acid and 2,3-dihydroxicinnamic acid into 2-hydroxy-6-ketononadienedioate and 2-hydroxy-6-ketononatrienedioate, respectively. This Mycolicibacterium paratuberculosis (strain ATCC BAA-968 / K-10) (Mycobacterium paratuberculosis) protein is 2,3-dihydroxyphenylpropionate/2,3-dihydroxicinnamic acid 1,2-dioxygenase.